Reading from the N-terminus, the 604-residue chain is Threonine--tRNA ligase (604 aa).

The segment at 210 to 501 (DHRKIGTEME…LTEHYAGEFP (292 aa)) is catalytic. Zn(2+) contacts are provided by C302, H353, and H478.

Belongs to the class-II aminoacyl-tRNA synthetase family. In terms of assembly, homodimer. Zn(2+) is required as a cofactor.

The protein localises to the cytoplasm. The catalysed reaction is tRNA(Thr) + L-threonine + ATP = L-threonyl-tRNA(Thr) + AMP + diphosphate + H(+). In terms of biological role, catalyzes the attachment of threonine to tRNA(Thr) in a two-step reaction: L-threonine is first activated by ATP to form Thr-AMP and then transferred to the acceptor end of tRNA(Thr). Also edits incorrectly charged L-seryl-tRNA(Thr). This Sulfurovum sp. (strain NBC37-1) protein is Threonine--tRNA ligase.